A 630-amino-acid polypeptide reads, in one-letter code: E3 ubiquitin-protein ligase TRIM41 (630 aa).

The RING-type; degenerate zinc-finger motif lies at 20–61 (CAICLDYFTDPVSIGCGHNFCRVCVTQLWGGEDEEDRDELDR). The span at 51–75 (EDEEDRDELDREEEEEEVGEEEEVE) shows a compositional bias: acidic residues. Disordered stretches follow at residues 51-97 (EDEE…GDME) and 148-176 (EDED…PPPA). T85 carries the post-translational modification Phosphothreonine. Residues 148 to 166 (EDEDEEEEVLEEDEEEELD) are compositionally biased toward acidic residues. The segment at 222–263 (NEQGICPRHQEALKLFCEVDEEAICVVCRESRSHKQHSVVPL) adopts a B box-type zinc-finger fold. Zn(2+)-binding residues include C227, H230, C249, and H255. K256 participates in a covalent cross-link: Glycyl lysine isopeptide (Lys-Gly) (interchain with G-Cter in SUMO2). Positions 281 to 374 (LRKHLEAVQK…AEAQERSQQG (94 aa)) form a coiled coil. The 218-residue stretch at 413–630 (LTDAIVRKMS…SKGTRIKLCP (218 aa)) folds into the B30.2/SPRY domain. The residue at position 447 (S447) is a Phosphoserine. Positions 503–535 (ARESTHHKEKVGSGGSSVSSGDASSSRHHHRRR) are disordered.

Belongs to the TRIM/RBCC family. As to quaternary structure, interacts with PRKCA. Interacts with NOD2. Interacts with TRIM17; this interaction prevents TRIM41 activity on ZSCAN2. Post-translationally, auto-ubiquitinated.

The protein localises to the cytoplasm. Its subcellular location is the nucleus. The enzyme catalyses S-ubiquitinyl-[E2 ubiquitin-conjugating enzyme]-L-cysteine + [acceptor protein]-L-lysine = [E2 ubiquitin-conjugating enzyme]-L-cysteine + N(6)-ubiquitinyl-[acceptor protein]-L-lysine.. Its pathway is protein modification; protein ubiquitination. In terms of biological role, E3 ligase that plays essential roles in innate antiviral response. Directly binds to influenza A virus or vesicular stomatitis virus nucleoproteins and targets them for ubiquitination and proteasomal degradation, thereby limiting viral infections. Activates the innate antiviral response by catalyzing monoubiquitination of CGAS, thereby activating CGAS. Also involved in innate antiviral response by mediating 'Lys-63'-linked polyubiquitylation of BCL10 which in turn hubs NEMO for activation of NF-kappa-B and IRF3 pathways. Catalyzes the ubiquitin-mediated degradation of other substrates including protein kinase C, ZSCAN21 or TOP3B suggesting additional roles besides its function in immune response. The protein is E3 ubiquitin-protein ligase TRIM41 of Mus musculus (Mouse).